Here is a 206-residue protein sequence, read N- to C-terminus: ATP synthase subunit b (206 aa).

The chain crosses the membrane as a helical span at residues 14 to 34 (VMMPAAVCAAVIGLSALGFAA).

The protein belongs to the ATPase B chain family. In terms of assembly, F-type ATPases have 2 components, F(1) - the catalytic core - and F(0) - the membrane proton channel. F(1) has five subunits: alpha(3), beta(3), gamma(1), delta(1), epsilon(1). F(0) has three main subunits: a(1), b(2) and c(10-14). The alpha and beta chains form an alternating ring which encloses part of the gamma chain. F(1) is attached to F(0) by a central stalk formed by the gamma and epsilon chains, while a peripheral stalk is formed by the delta and b chains.

It localises to the cell inner membrane. Functionally, f(1)F(0) ATP synthase produces ATP from ADP in the presence of a proton or sodium gradient. F-type ATPases consist of two structural domains, F(1) containing the extramembraneous catalytic core and F(0) containing the membrane proton channel, linked together by a central stalk and a peripheral stalk. During catalysis, ATP synthesis in the catalytic domain of F(1) is coupled via a rotary mechanism of the central stalk subunits to proton translocation. Its function is as follows. Component of the F(0) channel, it forms part of the peripheral stalk, linking F(1) to F(0). This is ATP synthase subunit b from Geobacter metallireducens (strain ATCC 53774 / DSM 7210 / GS-15).